The following is a 246-amino-acid chain: Transcription factor A, mitochondrial (246 aa).

The N-terminal 42 residues, Met1–Phe42, are a transit peptide targeting the mitochondrion. Positions Pro50–Lys118 form a DNA-binding region, HMG box 1. Phosphoserine; by PKA occurs at positions 55, 56, and 61. Thr122 is modified (phosphothreonine). A DNA-binding region (HMG box 2) is located at residues Pro155 to Glu219. A Phosphoserine; by PKA modification is found at Ser160. Ser193 and Ser195 each carry phosphoserine.

Monomer; binds DNA as a monomer. Homodimer. Component of the mitochondrial transcription initiation complex, composed at least of TFB2M, TFAM and POLRMT. In this complex TFAM recruits POLRMT to the promoter whereas TFB2M induces structural changes in POLRMT to enable promoter opening and trapping of the DNA non-template strand. Upon metabolic stress, forms a complex composed of FOXO3, SIRT3, TFAM and POLRMT. Interacts with TFB1M and TFB2M. Interacts with CLPX; this enhances DNA-binding. Phosphorylation by PKA within the HMG box 1 impairs DNA binding and promotes degradation by the AAA+ Lon protease.

It localises to the mitochondrion. The protein localises to the mitochondrion matrix. It is found in the mitochondrion nucleoid. In terms of biological role, binds to the mitochondrial light strand promoter and functions in mitochondrial transcription regulation. Component of the mitochondrial transcription initiation complex, composed at least of TFB2M, TFAM and POLRMT that is required for basal transcription of mitochondrial DNA. In this complex, TFAM recruits POLRMT to a specific promoter whereas TFB2M induces structural changes in POLRMT to enable promoter opening and trapping of the DNA non-template strand. Required for accurate and efficient promoter recognition by the mitochondrial RNA polymerase. Promotes transcription initiation from the HSP1 and the light strand promoter by binding immediately upstream of transcriptional start sites. Is able to unwind DNA. Bends the mitochondrial light strand promoter DNA into a U-turn shape via its HMG boxes. Required for maintenance of normal levels of mitochondrial DNA. May play a role in organizing and compacting mitochondrial DNA. The chain is Transcription factor A, mitochondrial from Homo sapiens (Human).